Consider the following 435-residue polypeptide: GTPase Der (435 aa).

EngA-type G domains lie at Asn-3 to Gly-167 and Pro-176 to Gly-351. GTP is bound by residues Gly-9–Ser-16, Asp-56–Tyr-60, Asn-119–Asp-122, Gly-182–Ser-189, Asp-229–Ile-233, and Asn-294–Asp-297. The 84-residue stretch at Lys-352–Lys-435 folds into the KH-like domain.

It belongs to the TRAFAC class TrmE-Era-EngA-EngB-Septin-like GTPase superfamily. EngA (Der) GTPase family. Associates with the 50S ribosomal subunit.

Its function is as follows. GTPase that plays an essential role in the late steps of ribosome biogenesis. The protein is GTPase Der of Cytophaga hutchinsonii (strain ATCC 33406 / DSM 1761 / CIP 103989 / NBRC 15051 / NCIMB 9469 / D465).